Here is an 83-residue protein sequence, read N- to C-terminus: Small ribosomal subunit protein bS16 (83 aa).

The protein belongs to the bacterial ribosomal protein bS16 family.

The protein is Small ribosomal subunit protein bS16 of Pseudomonas putida (strain ATCC 700007 / DSM 6899 / JCM 31910 / BCRC 17059 / LMG 24140 / F1).